Reading from the N-terminus, the 244-residue chain is Sperm-egg fusion protein Juno (244 aa).

The signal sequence occupies residues 1-19 (MAQWWLILLGLWTVLPSLA). Intrachain disulfides connect Cys-27-Cys-55, Cys-47-Cys-95, Cys-56-Cys-99, Cys-79-Cys-166, Cys-86-Cys-137, Cys-126-Cys-200, Cys-130-Cys-180, and Cys-143-Cys-160. The segment at 62-81 (WEAHLDEPLLFNFSMTHCGL) is important for interaction with IZUMO1. Residue Asn-73 is glycosylated (N-linked (GlcNAc...) asparagine). The propeptide occupies 223–244 (SASAPQLSYSITAFSLCLLLHA).

It belongs to the folate receptor family. Monomer. Interacts with IZUMO1; the interaction is direct. IZUMO1 and IZUMO1R/JUNO form a complex with 1:1 stoichiometry. Interacts with FCRL3/MAIA; FCRL3/MAIA replaces IZUMO1R/JUNO as IZUMO1 receptor after sperm-egg adhesion, thereby permitting species-specific gamete fusion. Interacts with WDR54. In terms of processing, the protein is rapidly cleaved following fertilization, being only weakly detectable in zona-intact fertilized eggs at telophase II and undetectable at the pronuclear stage. Sheding is probably required to block to polyspermy and ensuring egg fusion with a single sperm. In terms of tissue distribution, expressed in the oocyte (at protein level).

It is found in the cell membrane. Its subcellular location is the cell projection. The protein localises to the microvillus membrane. Functionally, receptor for IZUMO1 present at the cell surface of oocytes (oolemma), which is essential for species-specific gamete recognition and fertilization. The IZUMO1:IZUMO1R/JUNO interaction is a necessary adhesion event between sperm and egg that is required for fertilization but is not sufficient for cell fusion. The ligand-receptor interaction probably does not act as a membrane 'fusogen'. Does not bind folate. The protein is Sperm-egg fusion protein Juno (Izumo1r) of Rattus norvegicus (Rat).